Consider the following 65-residue polypeptide: Large ribosomal subunit protein bL35 (65 aa).

Residues 1 to 26 (MPKMKTNKSAQKRFKKTGSGRFKCKQ) are disordered. Residues 10–26 (AQKRFKKTGSGRFKCKQ) are compositionally biased toward basic residues.

It belongs to the bacterial ribosomal protein bL35 family.

This Hydrogenovibrio crunogenus (strain DSM 25203 / XCL-2) (Thiomicrospira crunogena) protein is Large ribosomal subunit protein bL35.